A 37-amino-acid chain; its full sequence is Photosystem I reaction center subunit IX (37 aa).

Residues 4-24 (FLTTAPVVAAIWFTLTAGILI) form a helical membrane-spanning segment.

It belongs to the PsaJ family.

Its subcellular location is the cellular thylakoid membrane. May help in the organization of the PsaE and PsaF subunits. The sequence is that of Photosystem I reaction center subunit IX from Synechococcus sp. (strain WH7803).